The chain runs to 218 residues: MGQKINPLGFRLGTTQGHHSLWFAQPKNYSKGLQEDQKIRDCIKNYVQKNIRISSGVEGIARIEIQKRIDLIQVIIYMGFPKLLVEGKPRRIEELQMNVQKELNYVNRKLNIAITRITKPYGHPNILAEFIAGQLRNRVSFRKAIKKAIELTEQADTKGIQVQIAGRIDGKEIARVEWIREGRVPLQTIRAKIDYCSYRVRTIYGVLGIKIWIFVDEE.

The KH type-2 domain occupies 47–118 (VQKNIRISSG…KLNIAITRIT (72 aa)).

Belongs to the universal ribosomal protein uS3 family. Part of the 30S ribosomal subunit.

Its subcellular location is the plastid. It is found in the chloroplast. The chain is Small ribosomal subunit protein uS3c (rps3) from Vitis vinifera (Grape).